Reading from the N-terminus, the 248-residue chain is Coenzyme F420:L-glutamate ligase (248 aa).

GTP contacts are provided by residues 15–18 (IPLI), 45–46 (ET), and lysine 50. Aspartate 115 contacts a divalent metal cation. A GTP-binding site is contributed by asparagine 118. The a divalent metal cation site is built by aspartate 155, serine 156, and glutamine 213. 211–218 (MGQSNEGI) contributes to the GTP binding site.

Belongs to the CofE family. Homodimer. The cofactor is Mg(2+). Requires Mn(2+) as cofactor. K(+) serves as cofactor.

The enzyme catalyses oxidized coenzyme F420-0 + GTP + L-glutamate = oxidized coenzyme F420-1 + GDP + phosphate + H(+). It catalyses the reaction oxidized coenzyme F420-1 + GTP + L-glutamate = oxidized coenzyme F420-2 + GDP + phosphate + H(+). It functions in the pathway cofactor biosynthesis; coenzyme F420 biosynthesis. Functionally, catalyzes the GTP-dependent successive addition of two or more gamma-linked L-glutamates to the L-lactyl phosphodiester of 7,8-didemethyl-8-hydroxy-5-deazariboflavin (F420-0) to form coenzyme F420-0-glutamyl-glutamate (F420-2) or polyglutamated F420 derivatives. The sequence is that of Coenzyme F420:L-glutamate ligase from Methanococcus maripaludis (strain C7 / ATCC BAA-1331).